The chain runs to 82 residues: Delta-ctenitoxin-Pn1a (82 aa).

An N-terminal signal peptide occupies residues 1-16; the sequence is MKVAIVFLSLLVLAFA. A propeptide spanning residues 17–34 is cleaved from the precursor; it reads SESIEENREEFPVEESAR. Cystine bridges form between C35–C49, C42–C55, C46–C82, C48–C65, and C57–C63.

This sequence belongs to the neurotoxin 03 (Tx2) family. 05 subfamily. Expressed by the venom gland.

The protein resides in the secreted. In terms of biological role, this neurotoxin binds at site 3 of insect voltage-activated sodium channels (Nav) and prolongs evoked axonal action potentials by a slowing down of sodium current inactivation. The toxin also inhibits glutamate uptake from rat brain synaptosomes. It reversibly inhibits the N-methyl-D-aspartate (NMDA)-subtype of ionotropic glutamate receptor (GRIN). In addition, the toxin shows antinociceptive effect in all rat pain models tested (inflammatory, neuropathic and nociceptive). The antinociceptive effect is partially blocked when selective antagonists of both mu- and delta-opioid receptors are administered, revealing that the antinociceptive effect of the toxin involves both opioid and cannabinoid endogenous systems. In vivo, it is highly toxic to house fly (Musca domestica), toxic to cockroach, but has no effect when intracerebroventricularly injected into mice. The polypeptide is Delta-ctenitoxin-Pn1a (Phoneutria nigriventer (Brazilian armed spider)).